A 282-amino-acid chain; its full sequence is Glutamyl endopeptidase (282 aa).

An N-terminal signal peptide occupies residues 1–27; that stretch reads MKKRFLSICTMTIAALATTTMVNTSYA. A propeptide spanning residues 28-66 is cleaved from the precursor; sequence KTDTESHNHSSLGTENKNVLDINSSSHNIKPSQNKSYPS. Catalysis depends on charge relay system residues H117, D159, and S235.

Belongs to the peptidase S1B family. Monomer.

It localises to the secreted. It carries out the reaction Preferential cleavage: Glu-|-Xaa, Asp-|-Xaa.. With respect to regulation, inhibited by diisopropyl fluorophosphate. In terms of biological role, exhibits a significant hydrolytic activity for the carbonyl side of glutamic acid. Shows activity toward human fibronectin and type 1 collagen. This is Glutamyl endopeptidase (gseA) from Staphylococcus epidermidis.